The chain runs to 767 residues: Golgin subfamily A member 1 (767 aa).

The interval 13 to 58 is disordered; the sequence is TAVAQRPGGATRIPRSVSKESVASMGADSGDDFASDGSSSREDLSS. A phosphoserine mark is found at S30, S36, S41, S47, S50, and S51. Residues 50–657 are a coiled coil; it reads SSSREDLSSQ…RKTLQKELKI (608 aa). Residues 688–737 enclose the GRIP domain; that stretch reads TDAREINFEYLKHVVLKFMSCRESEAFHLIKAVSVLLNFSQEEENMLKET. Positions 748–767 are disordered; that stretch reads KPAPKGSIRPSISNPRIPWS.

As to quaternary structure, interacts with RAB6A. Directly interacts with TBC1D23. Interacts with FAM91A1; this interaction may be mediated by TBC1D23. Interacts with ARL1; this interaction recruits Golgin-97/GOLGA1 onto the Golgi apparatus. MARylated by PARP12; MARylation is required for basolateral export of E-Cadherin.

It is found in the golgi apparatus membrane. The protein localises to the golgi apparatus. The protein resides in the trans-Golgi network membrane. Its subcellular location is the cytoplasmic vesicle. It localises to the secretory vesicle. It is found in the acrosome. Functionally, involved in vesicular trafficking at the Golgi apparatus level. Involved in endosome-to-Golgi trafficking. Mechanistically, captures transport vesicles arriving from endosomes via the protein TBC1D23. Recognized vesicles are then tethered to the trans-Golgi before subsequent SNARE engagement and vesicle fusion. Selectively regulates E-cadherin transport from the trans-Golgi network in tubulovesicular carriers. (Microbial infection) Plays an important role in poxvirus morphogenesis. Translocates into the viral factories where it may transport the membrane fragments and associated protein factors important for virus maturation to the sites of virion assembly. The sequence is that of Golgin subfamily A member 1 (GOLGA1) from Homo sapiens (Human).